The following is a 194-amino-acid chain: ATP-dependent Clp protease proteolytic subunit (194 aa).

Residue Ser-98 is the Nucleophile of the active site. Residue His-123 is part of the active site.

Belongs to the peptidase S14 family. Fourteen ClpP subunits assemble into 2 heptameric rings which stack back to back to give a disk-like structure with a central cavity, resembling the structure of eukaryotic proteasomes.

Its subcellular location is the cytoplasm. The catalysed reaction is Hydrolysis of proteins to small peptides in the presence of ATP and magnesium. alpha-casein is the usual test substrate. In the absence of ATP, only oligopeptides shorter than five residues are hydrolyzed (such as succinyl-Leu-Tyr-|-NHMec, and Leu-Tyr-Leu-|-Tyr-Trp, in which cleavage of the -Tyr-|-Leu- and -Tyr-|-Trp bonds also occurs).. In terms of biological role, cleaves peptides in various proteins in a process that requires ATP hydrolysis. Has a chymotrypsin-like activity. Plays a major role in the degradation of misfolded proteins. The sequence is that of ATP-dependent Clp protease proteolytic subunit from Alkaliphilus metalliredigens (strain QYMF).